We begin with the raw amino-acid sequence, 131 residues long: Beta/delta-urticatoxin-Dm2a (131 aa).

An N-terminal signal peptide occupies residues 1–24 (MKSSATVVLLVAAVTAAMVMSSSA). Residues 25–69 (SGDAVMIDEHNNIMTSVEGKRGIGSSVVANGGNRKMANVLLSGWE) constitute a propeptide that is removed on maturation. 6 disulfides stabilise this stretch: Cys72/Cys88, Cys79/Cys93, Cys87/Cys101, Cys103/Cys117, Cys110/Cys122, and Cys116/Cys130.

The protein belongs to the urticatoxin-2 family. Expressed in trichomes, that are stiff epidermal hairs located on the surface of petioles and leaves.

It is found in the secreted. Its function is as follows. Plant defense neurotoxin that causes pain and systemic symptoms in mammals via modulation of voltage-gated sodium channels (Nav). Potent modulator of human Nav1.5/SCN5A (EC(50)=55 nM), Nav1.6/SCN8A (EC(50)=0.86 nM), and Nav1.7/SCN9A (EC(50)=208 nM), where it shifts the activation threshold to more negative potentials and delays fast inactivation. Also shifts the voltage-dependence of steady-state fast inactivation of Nav1.6/SCN8A, but not that of Nav1.5/SCN5A or Nav1.7/SCN9A. On Nav1.7/SCN9A, principally acts by binding to extracellular loops of domain IV (Nav site 3). In vivo, intraplantar injection into mice causes numerous dose-dependent, immediate, and long-lasting spontaneous pain behaviors, while no swelling is observed in the injected paw. At the highest doses tested, systemic symptoms including hypokinesia and hypersalivation are observed. The polypeptide is Beta/delta-urticatoxin-Dm2a (Dendrocnide moroides (Gympie stinging tree)).